The primary structure comprises 290 residues: MSEKLQKVLARAGHGSRREIESIIEAGRVSVDGKIAKLGDRVEVTPGLKIRIDGHLISVRESAEQICRVLAYYKPEGELCTRNDPEGRPTVFDRLPKLRGARWIAVGRLDVNTCGLLLFTTDGELANRLMHPSREVEREYAVRVFGQVDDAKLRDLSRGVQLEDGPAAFKTIKFSGGEGINQWYNVTLTEGRNREVRRLWEAVGVQVSRLIRVRYGDIPLPKGLPRGGWTELDLAQTNYLRELVELPPETSSKVAVEKDRRRMKANQIRRAVKRHSQVSGGRRSGGRNNG.

The S4 RNA-binding domain maps to glutamate 3–proline 75. The active-site Nucleophile is the aspartate 110. Positions valine 256–glycine 290 are disordered.

This sequence belongs to the pseudouridine synthase RsuA family.

The catalysed reaction is uridine(2605) in 23S rRNA = pseudouridine(2605) in 23S rRNA. Responsible for synthesis of pseudouridine from uracil-2605 in 23S ribosomal RNA. The chain is Ribosomal large subunit pseudouridine synthase B (rluB) from Escherichia coli O157:H7.